We begin with the raw amino-acid sequence, 464 residues long: MKRFMDEDFLLNNKTAKVLYEKYAKDMPIVDFHCHLNPKEIYENKTFKNITEVWLGGDHYKWRLMRTNGIEEKYITGDADDYEKFLAWAKTIPMAIGNPIYHWTHLELKRYFGIDDVLNERSAPIIWEKTNKVLKELGARDIILKSNVEIICTTDDPIDTLEYHLKLKEDKDFNVKVYPTFRPDKGVNIERETFIPWVKKLAEVYGKKIESYDEFLDALKSRAEFFHSVGCRASDHAIDDMVFADASFDEVANIFKKALAGEKLTEIEFAKYKTYTLRFLGKVYSSLGWAMQLHINALRNNNTRMFNILGPDTGYDSINDGHIAFALVKFLDSLEKENSLPKTILYSLNPKDNYVLATIMGSFQGGGIPGKMQLGAAWWFNDSKDGNIQQMKDLANLGLLSRFVGMVTDSRSFLSYARHEYFRRLLCNLIGEWVENGEYPYDLETLGRIVQDICYYNAKEYFGF.

Belongs to the metallo-dependent hydrolases superfamily. Uronate isomerase family.

It carries out the reaction D-glucuronate = D-fructuronate. It catalyses the reaction aldehydo-D-galacturonate = keto-D-tagaturonate. It participates in carbohydrate metabolism; pentose and glucuronate interconversion. The protein is Uronate isomerase of Caldicellulosiruptor bescii (strain ATCC BAA-1888 / DSM 6725 / KCTC 15123 / Z-1320) (Anaerocellum thermophilum).